The chain runs to 396 residues: Calcium-responsive transactivator (396 aa).

The tract at residues 1–148 (MSVAFASARP…TLPTTSMSIS (148 aa)) is N-terminal auto-inhibitory domain; necessary for interaction with SMARCA4/BRG1. The SH2-binding signature appears at 50-53 (YQQI). 3 disordered regions span residues 72-162 (QSLL…SQGV), 192-280 (QAAT…GDYA), and 311-396 (SQQQ…NYQQ). A compositionally biased stretch (low complexity) spans 90 to 106 (LTQSGSSQGLHSQGSLS). Polar residues-rich tracts occupy residues 107–122 (DAIS…LQGQ) and 128–147 (SHVS…SMSI). The methionine-rich intra-molecular domain stretch occupies residues 149 to 232 (GPGYSHAGPA…GSSMMGQRPM (84 aa)). Composition is skewed to low complexity over residues 199–229 (SSAQ…MMGQ), 238–261 (SQQG…SHSQ), and 311–369 (SQQQ…YGSY). The segment at 246 to 317 (YLGQEEYYGE…SQYSQQQAGY (72 aa)) is MFD domain. Positions 334–396 (SQQSYPGQQQ…EQGQYGNYQQ (63 aa)) are necessary for nuclear localization. An SH2-binding motif is present at residues 353–356 (SQYP). The SH3-binding motif lies at 371-379 (APQTAPSAQ). Residues 384–396 (YGYEQGQYGNYQQ) are compositionally biased toward low complexity. Residues 387 to 396 (EQGQYGNYQQ) are necessary for interaction with CREBBP and for the recruitment of CREBBP to the nuclear bodies. Residues 391–394 (YGNY) carry the SH2-binding motif.

The protein belongs to the SS18 family. In terms of assembly, homodimer. Dimerization may be necessary for its function in neuronal dendritic development. Interacts (via C-terminus) with CREBBP (via N-terminus), EP300 and SMARCA4/BRG1. Interacts with the nBAF complex. Association with CREBBP facilitates transcription while the association with SMARCA4/BRG1 suppresses CREST-mediated transcription in resting neurons. In terms of tissue distribution, ubiquitous; with lowest levels in spleen.

Its subcellular location is the nucleus. It localises to the chromosome. It is found in the centromere. The protein resides in the kinetochore. Its function is as follows. Transcriptional activator which is required for calcium-dependent dendritic growth and branching in cortical neurons. Recruits CREB-binding protein (CREBBP) to nuclear bodies. Component of the CREST-BRG1 complex, a multiprotein complex that regulates promoter activation by orchestrating a calcium-dependent release of a repressor complex and a recruitment of an activator complex. In resting neurons, transcription of the c-FOS promoter is inhibited by BRG1-dependent recruitment of a phospho-RB1-HDAC1 repressor complex. Upon calcium influx, RB1 is dephosphorylated by calcineurin, which leads to release of the repressor complex. At the same time, there is increased recruitment of CREBBP to the promoter by a CREST-dependent mechanism, which leads to transcriptional activation. The CREST-BRG1 complex also binds to the NR2B promoter, and activity-dependent induction of NR2B expression involves a release of HDAC1 and recruitment of CREBBP. In Homo sapiens (Human), this protein is Calcium-responsive transactivator (SS18L1).